Consider the following 467-residue polypeptide: Signal transduction histidine-protein kinase BaeS (467 aa).

Over 1 to 11 (MKFWRPGITGK) the chain is Cytoplasmic. A helical transmembrane segment spans residues 12–32 (LFLAIFATCIVLLISMHWAVR). Residues 33-167 (ISFERGFIDY…NFDKQQRQTS (135 aa)) are Periplasmic-facing. A helical membrane pass occupies residues 168-186 (WLIVALATLLAALATFLLA). Positions 187-239 (RGLLAPVKRLVDGTHKLAAGDFTTRVTPTSEDELGKLAQDFNQLASTLEKNQQ) constitute an HAMP domain. Over 187-467 (RGLLAPVKRL…PLERDLQREV (281 aa)) the chain is Cytoplasmic. Residues 247-461 (DISHELRTPL…SITVELPLER (215 aa)) enclose the Histidine kinase domain. His-250 bears the Phosphohistidine; by autocatalysis mark.

Autophosphorylated.

The protein resides in the cell inner membrane. It catalyses the reaction ATP + protein L-histidine = ADP + protein N-phospho-L-histidine.. Member of the two-component regulatory system BaeS/BaeR which responds to envelope stress. Activates expression of periplasmic chaperone spy in response to spheroplast formation, indole and P pili protein PapG overexpression. Activates BaeR by phosphorylation which then activates the mdtABCD and probably the CRISPR-Cas casABCDE-ygbT-ygbF operons. This Escherichia coli (strain K12) protein is Signal transduction histidine-protein kinase BaeS.